Reading from the N-terminus, the 503-residue chain is MAADQGIFTNSVTLSPVEGSRTGGTLPRRAFRRSCDRCHAQKIKCTGNKEVTGRAPCQRCQQAGLRCVYSERCPKRKLRQSRAADLVSADPDPCLHMSSPPVPSQSLPLDVSESHSSNTSRQFLDPPDSYDWSWTSIGTDEAIDTDCWGLSQCDGGFSCQLEPTLPDLPSPFESTVEKAPLPPVSSDIARAASAQRELFDDLSAVSQELEEILLAVTVEWPKQEIWTRASPHSPTASRERIAQRRQNVWANWLTDLHMFSLDPIGMFFNASRRLLTVLRQQAQADCHQGTLDECLRTKNLFTAVHCYILNVRILTAISELLLSQIRRTQNSHMSPLEGSRSQSPSRDDTSSSSGHSSVDTIPFFSENLPIGELFSYVDPLTHALFSACTTLHVGVQLLRENEITLGVHSAQGIAASISMSGEPGEDIARTGATNSARCEEQPTTPAARVLFMFLSDEGAFQEAKSAGSRGRTIAALRRCYEDIFSLARKHKHGMLRDLNNIPP.

A DNA-binding region (zn(2)-C6 fungal-type) is located at residues 35–67; sequence CDRCHAQKIKCTGNKEVTGRAPCQRCQQAGLRC. 2 disordered regions span residues 89-124 and 331-358; these read ADPD…RQFL and SHMS…HSSV. Low complexity predominate over residues 339 to 357; sequence SRSQSPSRDDTSSSSGHSS.

The protein resides in the nucleus. In terms of biological role, transcription factor that regulates the expression of the he gene cluster that mediates the biosynthesis of lovastatin (also known as mevinolin, mevacor or monacolin K), a hypolipidemic inhibitor of (3S)-hydroxymethylglutaryl-coenzyme A (HMG-CoA) reductase (HMGR). The sequence is that of Transcriptional regulator LovE from Aspergillus terreus.